The sequence spans 107 residues: Large ribosomal subunit protein uL24 (107 aa).

This sequence belongs to the universal ribosomal protein uL24 family. In terms of assembly, part of the 50S ribosomal subunit.

One of two assembly initiator proteins, it binds directly to the 5'-end of the 23S rRNA, where it nucleates assembly of the 50S subunit. In terms of biological role, one of the proteins that surrounds the polypeptide exit tunnel on the outside of the subunit. This chain is Large ribosomal subunit protein uL24, found in Nitratidesulfovibrio vulgaris (strain DSM 19637 / Miyazaki F) (Desulfovibrio vulgaris).